Consider the following 1068-residue polypeptide: Disheveled-associated activator of morphogenesis 2 (1068 aa).

The region spanning S40–V416 is the GBD/FH3 domain. Residues M434–T516 are a coiled coil. Residues L514–Y586 form a disordered region. Positions P518–R594 constitute an FH1 domain. The span at L540–P572 shows a compositional bias: pro residues. The 400-residue stretch at K595 to M994 folds into the FH2 domain. S1015 is subject to Phosphoserine. The DAD domain maps to S1016 to K1048.

The protein belongs to the formin homology family. As to quaternary structure, interacts with DVL3. Interacts with INF2. As to expression, expressed in most tissues examined. Expressed in kidney glomeruli.

Key regulator of the Wnt signaling pathway, which is required for various processes during development, such as dorsal patterning, determination of left/right symmetry or myelination in the central nervous system. Acts downstream of Wnt ligands and upstream of beta-catenin (CTNNB1). Required for canonical Wnt signaling pathway during patterning in the dorsal spinal cord by promoting the aggregation of Disheveled (Dvl) complexes, thereby clustering and formation of Wnt receptor signalosomes and potentiating Wnt activity. During dorsal patterning of the spinal cord, inhibits oligodendrocytes differentiation via interaction with PIP5K1A. Also regulates non-canonical Wnt signaling pathway. Acts downstream of PITX2 in the developing gut and is required for left/right asymmetry within dorsal mesentery: affects mesenchymal condensation by lengthening cadherin-based junctions through WNT5A and non-canonical Wnt signaling, inducing polarized condensation in the left dorsal mesentery necessary to initiate gut rotation. Together with DAAM1, required for myocardial maturation and sarcomere assembly. Is a regulator of actin nucleation and elongation, filopodia formation and podocyte migration. The sequence is that of Disheveled-associated activator of morphogenesis 2 from Homo sapiens (Human).